A 374-amino-acid chain; its full sequence is Alpha-galactosylglucosyldiacylglycerol synthase (374 aa).

The protein belongs to the glycosyltransferase group 1 family. Glycosyltransferase 4 subfamily. Requires Mg(2+) as cofactor.

The protein localises to the cell membrane. The catalysed reaction is a 1,2-diacyl-3-O-(alpha-D-glucopyranosyl)-sn-glycerol + UDP-alpha-D-galactose = a 1,2-diacyl-3-O-[alpha-D-galactopyranosyl-(1-&gt;2)-alpha-D-glucopyranosyl]-sn-glycerol + UDP + H(+). Its activity is regulated as follows. Activated by the negatively charged lipid phosphatidylglycerol (PG). Galactosyltransferase involved in the biosynthesis of the bilayer-forming membrane lipid alpha-galactosyl-glucosyldiacylglycerol which is involved in maintaining constant nonbilayer/bilayer conditions (curvature packing stress). Also involved in the beta-lactam resistance. Catalyzes the transfer of a galactosyl residue from UDP-Gal to alpha-glucosyl-DAG (1,2-diacyl-3-O-(alpha-D-glucopyranosyl)-sn-glycerol) acceptor to form the corresponding galactosyl-glycosyl-DAG product (3-O-alpha-(D-galactopyranosyl-alpha-(1-&gt;2)-D-glucopyranosyl)-1,2-diacyl-sn-glycerol). It can only use UDP-Gal as sugar donor and alpha-glucosyl-DAG is the preferred sugar acceptor. The sequence is that of Alpha-galactosylglucosyldiacylglycerol synthase (cpoA) from Streptococcus pneumoniae (strain ATCC BAA-255 / R6).